Here is an 842-residue protein sequence, read N- to C-terminus: Oligopeptide transporter phomP2' (842 aa).

The disordered stretch occupies residues 1 to 58; it reads MEADPKVPFTDEMNIQDEHNWESGSWSSSRRSNDSNVTLLSRRSSVEQHEDERQKDSD. Positions 23–36 are enriched in low complexity; sequence SGSWSSSRRSNDSN. N33 and N36 each carry an N-linked (GlcNAc...) asparagine glycan. Residues 44–58 are compositionally biased toward basic and acidic residues; that stretch reads SSVEQHEDERQKDSD. The next 6 membrane-spanning stretches (helical) occupy residues 105-125, 177-197, 210-230, 268-288, 315-335, and 345-365; these read VWLL…VYYF, ALVV…GPLS, PWAI…VGLY, VFMA…FVFP, GFGL…SPLF, and FVGA…SDAL. 2 N-linked (GlcNAc...) asparagine glycosylation sites follow: N386 and N398. The next 4 helical transmembrane spans lie at 415 to 435, 478 to 498, 505 to 525, and 585 to 605; these read AMHF…AVLF, AWYA…LYAG, WGLQ…GMLF, and WELL…NWAV. A compositionally biased stretch (gly residues) spans 629–649; the sequence is QGLGLGQGGGGGGGGGGGGGQ. A disordered region spans residues 629-657; that stretch reads QGLGLGQGGGGGGGGGGGGGQQQRAAGAH. 3 consecutive transmembrane segments (helical) span residues 668-688, 700-720, and 731-751; these read NFFS…FGGG, WLLP…WLIH, and WPLH…FPTT. N752 is a glycosylation site (N-linked (GlcNAc...) asparagine). The chain crosses the membrane as a helical span at residues 784–804; sequence AGLDCGAQLVQMVLGLAFLVF.

It belongs to the oligopeptide OPT transporter family.

The protein localises to the membrane. In terms of biological role, oligopeptide transporter; part of the gene cluster that mediates the biosynthesis of the phomopsins, a group of hexapeptide mycotoxins which infects lupins and causes lupinosis disease in livestock. This chain is Oligopeptide transporter phomP2', found in Diaporthe leptostromiformis (Lupinosis disease fungus).